We begin with the raw amino-acid sequence, 245 residues long: Adenosylcobinamide-GDP ribazoletransferase (245 aa).

A run of 5 helical transmembrane segments spans residues 35–55 (WFPL…ALGL), 108–128 (IGAF…IGAH), 137–157 (GVLI…AALV), 176–196 (IAIG…TPAI), and 197–217 (TTVT…HLAR).

This sequence belongs to the CobS family. Requires Mg(2+) as cofactor.

The protein localises to the cell inner membrane. It catalyses the reaction alpha-ribazole + adenosylcob(III)inamide-GDP = adenosylcob(III)alamin + GMP + H(+). The catalysed reaction is alpha-ribazole 5'-phosphate + adenosylcob(III)inamide-GDP = adenosylcob(III)alamin 5'-phosphate + GMP + H(+). The protein operates within cofactor biosynthesis; adenosylcobalamin biosynthesis; adenosylcobalamin from cob(II)yrinate a,c-diamide: step 7/7. Its function is as follows. Joins adenosylcobinamide-GDP and alpha-ribazole to generate adenosylcobalamin (Ado-cobalamin). Also synthesizes adenosylcobalamin 5'-phosphate from adenosylcobinamide-GDP and alpha-ribazole 5'-phosphate. This Nitratidesulfovibrio vulgaris (strain ATCC 29579 / DSM 644 / CCUG 34227 / NCIMB 8303 / VKM B-1760 / Hildenborough) (Desulfovibrio vulgaris) protein is Adenosylcobinamide-GDP ribazoletransferase.